The sequence spans 329 residues: uncharacterized protein (329 aa).

Positions 1–32 are cleaved as a signal peptide; that stretch reads MSQDRGPRRPRRLEKCALISASATVLSLTASG. The N-palmitoyl cysteine moiety is linked to residue cysteine 33. A lipid anchor (S-diacylglycerol cysteine) is attached at cysteine 33.

It localises to the cell membrane. This is an uncharacterized protein from Streptomyces coelicolor (strain ATCC BAA-471 / A3(2) / M145).